The primary structure comprises 264 residues: Glutamate racemase (264 aa).

Substrate contacts are provided by residues 10–11 and 42–43; these read DS and YG. C73 acts as the Proton donor/acceptor in catalysis. Residue 74-75 coordinates substrate; sequence NT. The active-site Proton donor/acceptor is C183. 184 to 185 provides a ligand contact to substrate; the sequence is TH.

This sequence belongs to the aspartate/glutamate racemases family.

The enzyme catalyses L-glutamate = D-glutamate. It functions in the pathway cell wall biogenesis; peptidoglycan biosynthesis. Its function is as follows. Provides the (R)-glutamate required for cell wall biosynthesis. The sequence is that of Glutamate racemase from Streptococcus pneumoniae serotype 19F (strain G54).